A 721-amino-acid chain; its full sequence is Probable acyl-activating enzyme 17, peroxisomal (721 aa).

The Microbody targeting signal motif lies at 719–721 (SKL).

This sequence belongs to the ATP-dependent AMP-binding enzyme family. Expressed in leaves, stems and developing seeds.

It localises to the peroxisome. Its function is as follows. May act as an acid--thiol ligase that activates carboxylic acids by forming acyl-CoAs. In Arabidopsis thaliana (Mouse-ear cress), this protein is Probable acyl-activating enzyme 17, peroxisomal (AAE17).